Reading from the N-terminus, the 410-residue chain is DNA replication and repair protein RecF (410 aa).

30–37 (GPNGHGKT) is an ATP binding site.

This sequence belongs to the RecF family.

It localises to the cytoplasm. Functionally, the RecF protein is involved in DNA metabolism; it is required for DNA replication and normal SOS inducibility. RecF binds preferentially to single-stranded, linear DNA. It also seems to bind ATP. In Rhodococcus opacus (strain B4), this protein is DNA replication and repair protein RecF.